The chain runs to 202 residues: uncharacterized protein (202 aa).

The 81-residue stretch at 116-196 (LDLHGMTCSE…GKGTTWVLLK (81 aa)) folds into the Smr domain.

This is an uncharacterized protein from Treponema pallidum (strain Nichols).